We begin with the raw amino-acid sequence, 377 residues long: Enoyl reductase cheB (377 aa).

Positions 18 to 361 are enoyl reductase (ER) domain; the sequence is GGSLVIARDV…REISAEKLVV (344 aa). An NADP(+)-binding site is contributed by 49–52; that stretch reads CDFK. A substrate-binding site is contributed by 137 to 144; sequence PCCIATMG. NADP(+)-binding positions include 173-176, 200-203, tyrosine 218, 265-266, and threonine 283; these read SSSV, SPKN, and LE. Residue 285 to 289 coordinates substrate; that stretch reads GAIII. 354–355 provides a ligand contact to NADP(+); it reads IS.

It belongs to the zinc-containing alcohol dehydrogenase family. Requires heme as cofactor.

Its pathway is secondary metabolite biosynthesis. Functionally, enoyl reductase; part of the gene cluster that mediates the biosynthesis of chaetoglobosin A which has a unique inhibitory activity against actin polymerization in mammalian cells. Chaetoglobosin A and its intermediates are involved in the morphological differentiation of C.globosum. The first step of the pathway is the synthesis of prochaetoglobosin I via condensation of one acetyl-CoA, 8 malonyl-CoA, and a L-tryptophan molecule by the PKS-NRPS hybrid synthetase cheA, followed by reduction of backbone double bond to install desired geometry by the enoyl reductase cheB. Further multiple oxidation steps performed by the cytochrome P450 monooxygenases cheE and cheG, as well as by the FAD-linked oxidoreductase cheF, lead to the formation of chaetoglobosin A. Depending on the order of action of these reductases, distinct intermediates can be identified. Within the pathway, the cytochrome P450 monooxygenase cheE catalyzes a stereospecific epoxidation on prochaetoglobosin I, cytoglobosin D, and chaetoglobosin J intermediates. The FAD-linked oxidoreductase cheF performs dehydrogenation of the C-20 hydroxyl groups in the 20-dihyrochaetoglobosin A and cytoglobosin D intermediates. Finally, the cytochrome P450 monooxygenase cheG can catalyze the stereospecific dihydroxylation of prochaetoglobosin I and prochaetoglobosin IV at C-19 and C-20, respectively. The Diels-Alderase cheD may play a role in the post-PKS-NRPS biosynthetic steps catalyzing Diels-Alder cyclization. This chain is Enoyl reductase cheB, found in Chaetomium globosum (strain ATCC 6205 / CBS 148.51 / DSM 1962 / NBRC 6347 / NRRL 1970) (Soil fungus).